We begin with the raw amino-acid sequence, 150 residues long: UPF0178 protein ASA_3749 (150 aa).

The protein belongs to the UPF0178 family.

This chain is UPF0178 protein ASA_3749, found in Aeromonas salmonicida (strain A449).